Consider the following 131-residue polypeptide: MSDIPGDLKFLKSHEWVRIEDNNRAIVGISDHAQNLLGDLVYVELPNIGDHLDAGATAAVIESVKAASDIYSPVTGKVIEVNTTLSDKPETINEDPYGEGWIMVIEMQAPEEISDLLSPDDYTEVLESDEH.

The Lipoyl-binding domain occupies 24 to 106 (RAIVGISDHA…YGEGWIMVIE (83 aa)). Lysine 65 bears the N6-lipoyllysine mark.

The protein belongs to the GcvH family. The glycine cleavage system is composed of four proteins: P, T, L and H. (R)-lipoate is required as a cofactor.

Functionally, the glycine cleavage system catalyzes the degradation of glycine. The H protein shuttles the methylamine group of glycine from the P protein to the T protein. The sequence is that of Glycine cleavage system H protein from Xylella fastidiosa (strain M12).